A 127-amino-acid polypeptide reads, in one-letter code: Small ribosomal subunit protein uS11 (127 aa).

This sequence belongs to the universal ribosomal protein uS11 family. Part of the 30S ribosomal subunit. Interacts with proteins S7 and S18. Binds to IF-3.

Functionally, located on the platform of the 30S subunit, it bridges several disparate RNA helices of the 16S rRNA. Forms part of the Shine-Dalgarno cleft in the 70S ribosome. In Nitrosococcus oceani (strain ATCC 19707 / BCRC 17464 / JCM 30415 / NCIMB 11848 / C-107), this protein is Small ribosomal subunit protein uS11.